Here is a 211-residue protein sequence, read N- to C-terminus: uncharacterized protein (211 aa).

Composition is skewed to low complexity over residues 1–19 and 61–74; these read MQDPHVPSSPTISSVSSSD and SPSVAISRASSSNA. Disordered regions lie at residues 1 to 27 and 54 to 94; these read MQDPHVPSSPTISSVSSSDLDTESTGS and ASSR…EPHR.

In terms of assembly, interacts with RLK902. Expressed in inflorescences, stems, rosette leaves and weakly in roots.

This is an uncharacterized protein from Arabidopsis thaliana (Mouse-ear cress).